An 89-amino-acid polypeptide reads, in one-letter code: Small cysteine-rich protein 1 (89 aa).

The first 20 residues, 1 to 20 (MDVRFRLCLFLVILVIVANA), serve as a signal peptide directing secretion. Positions 21-27 (NVIKEPE) are excised as a propeptide.

Belongs to the Cnidaria small cysteine-rich protein (SCRiP) family. gamma subfamily. In terms of processing, contains 4 disulfide bonds.

Its subcellular location is the secreted. It is found in the nematocyst. Induces neurotoxic symptoms on zebrafish. Has also been claimed to be implied in calcification, but tests on homolog proteins suggest that proteins of this family have a neurotoxic function and not a calcification function. The chain is Small cysteine-rich protein 1 from Acropora millepora (Staghorn coral).